Reading from the N-terminus, the 55-residue chain is Large ribosomal subunit protein bL33m (55 aa).

This sequence belongs to the bacterial ribosomal protein bL33 family. In terms of assembly, component of the mitochondrial large ribosomal subunit (mt-LSU). Mature yeast 74S mitochondrial ribosomes consist of a small (37S) and a large (54S) subunit. The 37S small subunit contains a 15S ribosomal RNA (15S mt-rRNA) and at least 32 different proteins. The 54S large subunit contains a 21S rRNA (21S mt-rRNA) and at least 45 different proteins. bL33m stabilizes the tRNA acceptor stem in the E-site.

It is found in the mitochondrion. Its function is as follows. Component of the mitochondrial ribosome (mitoribosome), a dedicated translation machinery responsible for the synthesis of mitochondrial genome-encoded proteins, including at least some of the essential transmembrane subunits of the mitochondrial respiratory chain. The mitoribosomes are attached to the mitochondrial inner membrane and translation products are cotranslationally integrated into the membrane. This is Large ribosomal subunit protein bL33m (mrpl39) from Schizosaccharomyces pombe (strain 972 / ATCC 24843) (Fission yeast).